A 766-amino-acid polypeptide reads, in one-letter code: MAPGPFSSGLLSPPPAALPFLLLLWAGASRGQPCPGRCICQNVAPTLTMLCAKTGLLFVPPAIDRRVVELRLTDNFIAAVRRRDFANMTSLVHLTLSRNTIGQVAAGAFADLRALRALHLDSNRLAEVRGDQLRGLGNLRHLILGNNQIRKVESAAFDAFLSTVEDLDLSYNNLEALPWEAVGQMVNLNTLTLDHNLIDHIAEGTFVQLHKLVRLDMTSNRLHKLPPDGLFLRSQGGGPKPPTPLTVSFGGNPLHCNCELLWLRRLTREDDLETCATPEHLTDRYFWSIPEEEFLCEPPLITRQAGGRALVVEGQAVSLRCRAVGDPEPVVHWVAPDGRLLGNSSRTRVRGDGTLDVTITTLRDSGTFTCIASNAAGEATAPVEVCVVPLPLMAPPPAAPPPLTEPGSSDIATPGRPGANDSATERRLVAAELTSSSVLIRWPAQRPVPGIRMYQVQYNSSADDSLVYRMIPSTSQTFLVNDLAAGRAYDLCVLAVYDDGATALPATRVVGCVQFTTAGDPAPCRPLRAHFLGGTMIIAIGGVIVASVLVFIVLLMIRYKVYGDGDSRRIKGTSRSPPRVSHVCSQTNGSSAQQASAPPAPDRYEALREVAVPAAIEAKAMEAEATSTELEVVLGRSLGGSATSLCLLPSEETSGEESRAVTGPRRSRSGALGPPTSAPPTLALVRGGSPARPRPQQRYSFDGDYGALFQSHSYPRRARRTKRHRSTPHLDGAGGGAAGEDGDLGLGSARARLAFTSTEWMLESTV.

The first 31 residues, 1 to 31 (MAPGPFSSGLLSPPPAALPFLLLLWAGASRG), serve as a signal peptide directing secretion. The LRRNT domain occupies 32 to 65 (QPCPGRCICQNVAPTLTMLCAKTGLLFVPPAIDR). Residues 32-536 (QPCPGRCICQ…LRAHFLGGTM (505 aa)) are Extracellular-facing. 7 LRR repeats span residues 66-87 (RVVELRLTDNFIAAVRRRDFAN), 90-111 (SLVHLTLSRNTIGQVAAGAFAD), 114-135 (ALRALHLDSNRLAEVRGDQLRG), 138-159 (NLRHLILGNNQIRKVESAAFDA), 163-184 (TVEDLDLSYNNLEALPWEAVGQ), 187-208 (NLNTLTLDHNLIDHIAEGTFVQ), and 211-232 (KLVRLDMTSNRLHKLPPDGLFL). A glycan (N-linked (GlcNAc...) asparagine) is linked at N87. An LRRCT domain is found at 252-298 (NPLHCNCELLWLRRLTREDDLETCATPEHLTDRYFWSIPEEEFLCEP). The region spanning 299–386 (PLITRQAGGR…GEATAPVEVC (88 aa)) is the Ig-like domain. A disulfide bond links C321 and C370. N-linked (GlcNAc...) asparagine glycosylation occurs at N343. The segment at 397 to 422 (PAAPPPLTEPGSSDIATPGRPGANDS) is disordered. The region spanning 424–520 (TERRLVAAEL…GCVQFTTAGD (97 aa)) is the Fibronectin type-III domain. Residues 537-557 (IIAIGGVIVASVLVFIVLLMI) traverse the membrane as a helical segment. At 558-766 (RYKVYGDGDS…STEWMLESTV (209 aa)) the chain is on the cytoplasmic side. Disordered regions lie at residues 568-601 (RRIKGTSRSPPRVSHVCSQTNGSSAQQASAPPAP) and 646-742 (CLLP…GEDG). S713 is modified (phosphoserine). A compositionally biased stretch (basic residues) spans 714–727 (YPRRARRTKRHRST).

The protein belongs to the LRFN family. In terms of assembly, forms heteromeric complexes with LRFN2, LRFN4 and LRFN5; binding to LRFN2 and LRFN5 may be weaker than that to LRFN4. Also interacts with LRFN3. Forms homomeric complexes, but not across cell junctions. Interacts with DLG1, DLG2 and DLG4, but not with MAGI2, not CASK. Interacts with DLG3. Interacts with 2 AMPA receptor subunits GRIA1 and GRIA2 and NMDA receptor subunit GRIN1. Post-translationally, glycosylated. As to expression, mainly expressed in brain (at protein level) and testis. In brain, found in cerebral cortex (including pyramidal neurons), hippocampus (including CA3 and CA1 neurons), dentate gyrus, cerebellum (including Purkinje neurons) (at protein level) (at protein level). Also expressed in the olfactory bulb.

The protein localises to the membrane. It localises to the synapse. It is found in the postsynaptic density membrane. Functionally, promotes neurite outgrowth in hippocampal neurons. Involved in the regulation of the differentiation and maintenance of excitatory synapses. Induces the clustering of excitatory postsynaptic proteins, including DLG4, DLGAP1, GRIA1 and GRIN1. The sequence is that of Leucine-rich repeat and fibronectin type III domain-containing protein 1 (Lrfn1) from Rattus norvegicus (Rat).